We begin with the raw amino-acid sequence, 223 residues long: Deoxyribose-phosphate aldolase (223 aa).

Asp-89 serves as the catalytic Proton donor/acceptor. Lys-152 (schiff-base intermediate with acetaldehyde) is an active-site residue. The Proton donor/acceptor role is filled by Lys-181.

This sequence belongs to the DeoC/FbaB aldolase family. DeoC type 1 subfamily.

It is found in the cytoplasm. It catalyses the reaction 2-deoxy-D-ribose 5-phosphate = D-glyceraldehyde 3-phosphate + acetaldehyde. It participates in carbohydrate degradation; 2-deoxy-D-ribose 1-phosphate degradation; D-glyceraldehyde 3-phosphate and acetaldehyde from 2-deoxy-alpha-D-ribose 1-phosphate: step 2/2. Functionally, catalyzes a reversible aldol reaction between acetaldehyde and D-glyceraldehyde 3-phosphate to generate 2-deoxy-D-ribose 5-phosphate. This Listeria monocytogenes serotype 4a (strain HCC23) protein is Deoxyribose-phosphate aldolase.